We begin with the raw amino-acid sequence, 395 residues long: Zinc finger protein 385D (395 aa).

3 Matrin-type zinc fingers span residues 80–110 (ISCN…KLKA), 204–234 (LYCS…MLEA), and 267–297 (FHCE…RASG). The segment at 282 to 308 (LKQHISSRRHKDRASGKPPKPKYSPYN) is disordered.

It localises to the nucleus. This chain is Zinc finger protein 385D (Znf385d), found in Rattus norvegicus (Rat).